We begin with the raw amino-acid sequence, 227 residues long: Ribonuclease 3 (227 aa).

The 130-residue stretch at 4–133 folds into the RNase III domain; the sequence is FETLEKLLGY…LIAAIYLDSN (130 aa). E46 is a binding site for Mg(2+). The active site involves D50. Mg(2+) is bound by residues N119 and E122. E122 is an active-site residue. In terms of domain architecture, DRBM spans 158-226; sequence DPKTALQEWA…ARDLLHRLQD (69 aa).

Belongs to the ribonuclease III family. As to quaternary structure, homodimer. Mg(2+) serves as cofactor.

It is found in the cytoplasm. The enzyme catalyses Endonucleolytic cleavage to 5'-phosphomonoester.. Its function is as follows. Digests double-stranded RNA. Involved in the processing of primary rRNA transcript to yield the immediate precursors to the large and small rRNAs (23S and 16S). Processes some mRNAs, and tRNAs when they are encoded in the rRNA operon. Processes pre-crRNA and tracrRNA of type II CRISPR loci if present in the organism. This is Ribonuclease 3 from Rickettsia akari (strain Hartford).